A 274-amino-acid polypeptide reads, in one-letter code: 3-methyl-2-oxobutanoate hydroxymethyltransferase (274 aa).

Mg(2+) is bound by residues Asp-49 and Asp-88. 3-methyl-2-oxobutanoate-binding positions include 49 to 50, Asp-88, and Lys-118; that span reads DS. Glu-120 contributes to the Mg(2+) binding site. Catalysis depends on Glu-187, which acts as the Proton acceptor.

This sequence belongs to the PanB family. Homodecamer; pentamer of dimers. Mg(2+) serves as cofactor.

Its subcellular location is the cytoplasm. It catalyses the reaction 3-methyl-2-oxobutanoate + (6R)-5,10-methylene-5,6,7,8-tetrahydrofolate + H2O = 2-dehydropantoate + (6S)-5,6,7,8-tetrahydrofolate. It participates in cofactor biosynthesis; (R)-pantothenate biosynthesis; (R)-pantoate from 3-methyl-2-oxobutanoate: step 1/2. Its function is as follows. Catalyzes the reversible reaction in which hydroxymethyl group from 5,10-methylenetetrahydrofolate is transferred onto alpha-ketoisovalerate to form ketopantoate. This Allorhizobium ampelinum (strain ATCC BAA-846 / DSM 112012 / S4) (Agrobacterium vitis (strain S4)) protein is 3-methyl-2-oxobutanoate hydroxymethyltransferase.